A 293-amino-acid chain; its full sequence is Elongation factor Ts (293 aa).

The tract at residues 81–84 is involved in Mg(2+) ion dislocation from EF-Tu; sequence TDFV.

It belongs to the EF-Ts family.

It localises to the cytoplasm. Functionally, associates with the EF-Tu.GDP complex and induces the exchange of GDP to GTP. It remains bound to the aminoacyl-tRNA.EF-Tu.GTP complex up to the GTP hydrolysis stage on the ribosome. The protein is Elongation factor Ts of Thioalkalivibrio sulfidiphilus (strain HL-EbGR7).